The following is a 265-amino-acid chain: Early E4 31 kDa protein (265 aa).

It belongs to the adenoviridae E4 30 to 34 kDa protein family. As to quaternary structure, interacts with E1B-55k.

The protein localises to the host nucleus. Its subcellular location is the host cytoplasm. Plays a major role to prevent cellular inhibition of viral genome replication by nuclear bodies. Assembles an SCF-like E3 ubiquitin ligase complex based on the cellular proteins ELOB, ELOC, CUL5 and RBX1, in cooperation with viral E1B-55K. This viral RING-type ligase ubiquitinates cellular substrates prior to proteasomal degradation: p53/TP53, LIG4, MRE11-RAD50-NBS1 (MRN) complex, ITGA3, DAXX and BLM. The protein is Early E4 31 kDa protein of Canine adenovirus serotype 1 (strain RI261) (CAdV-1).